The following is a 189-amino-acid chain: MAGMSLLRRVSVTAVAALSGRSLGTRLGFGGFLTRGFPKAVAPVRHSGGHGKRLFVIKPSRFYDIRFLKLLRFYIALTGIPVVIIITLVNVFIGEAELAEIPEGYIPEHWEYYKHPISRWIARNFYDSPEKIYEKSMAVLQIEAEKAELRLKELEVRRLMRMRGDGPWYYYETIDKELIDHSPKATPDN.

A mitochondrion-targeting transit peptide spans 1 to 46; the sequence is MAGMSLLRRVSVTAVAALSGRSLGTRLGFGGFLTRGFPKAVAPVRH. A helical transmembrane segment spans residues 73–93; that stretch reads FYIALTGIPVVIIITLVNVFI.

It belongs to the complex I NDUFB5 subunit family. As to quaternary structure, complex I is composed of 45 different subunits.

The protein localises to the mitochondrion inner membrane. Functionally, accessory subunit of the mitochondrial membrane respiratory chain NADH dehydrogenase (Complex I), that is believed not to be involved in catalysis. Complex I functions in the transfer of electrons from NADH to the respiratory chain. The immediate electron acceptor for the enzyme is believed to be ubiquinone. The sequence is that of NADH dehydrogenase [ubiquinone] 1 beta subcomplex subunit 5, mitochondrial (NDUFB5) from Macaca fascicularis (Crab-eating macaque).